The sequence spans 396 residues: MAIIQSSAYEPLTEQKATALAVRLGLFRDGTPLLCREIGDGNLNLVFHVVDQETKQGIIIKQALPYAKVVGESWPLTLKRAVIESNALRTFASYVPQYVPKVYYSDESLAITVMEDLSYLQIARKGLIEGKTYPLLSRHIGEFIAKTAFYTSDFGMNQQEKKKLAQSFVNPELCKITEDLVFTDPFFDHDSNNFEDELHLDVETLWNDDRLHLEAAKLKRKFLTEADVLLHGDLHTGSIFASDDETKVIDPEFAFYGPIGFDLGHFIANLLLNALSRPESERRPLFDHIDRTWAVFTSVFSELWRTESVETYAATPGLLDDVLRQTFIDAVGFAGCEVIRRTIGLAHVADLDGIEQKDERLAAKRHALRLGRRLIVERAELDGTEDFRRLFVETER.

ATP contacts are provided by residues Asn44, Lys61, and 115–117 (EDL). Asp233 provides a ligand contact to substrate. 250–252 (DPE) serves as a coordination point for ATP. A substrate-binding site is contributed by Arg340.

It belongs to the methylthioribose kinase family. In terms of assembly, homodimer.

The catalysed reaction is 5-(methylsulfanyl)-D-ribose + ATP = 5-(methylsulfanyl)-alpha-D-ribose 1-phosphate + ADP + H(+). Its pathway is amino-acid biosynthesis; L-methionine biosynthesis via salvage pathway; S-methyl-5-thio-alpha-D-ribose 1-phosphate from S-methyl-5'-thioadenosine (hydrolase route): step 2/2. Functionally, catalyzes the phosphorylation of methylthioribose into methylthioribose-1-phosphate. This is Methylthioribose kinase from Geobacillus thermodenitrificans (strain NG80-2).